A 354-amino-acid polypeptide reads, in one-letter code: Probable N-acetylmuramoyl-L-alanine amidase (354 aa).

The N-terminal stretch at 1–39 (MVKVINNFVKVNQYDRPGLKLAAVKGIVMHWTATPGASA) is a signal peptide. Positions 40–152 (LNERNYFNGT…YDVTNKGCPT (113 aa)) constitute an N-acetylmuramoyl-L-alanine amidase domain.

The protein belongs to the N-acetylmuramoyl-L-alanine amidase 2 family.

The protein resides in the secreted. It catalyses the reaction Hydrolyzes the link between N-acetylmuramoyl residues and L-amino acid residues in certain cell-wall glycopeptides.. The sequence is that of Probable N-acetylmuramoyl-L-alanine amidase from Bacillus licheniformis.